A 428-amino-acid chain; its full sequence is MTVYVEKVRALEIFDSRGNPTVEVHAYLSDGTVAKAEVPSGASTGEKEAVELRDGGNRLQGKGVTQAVTNVNGPINDALKGLSPYNQAEIDRTMIKLDGTLNKAKLGANAILGTSMAIARAAARSKDEPLYRYLGGCELEMPQTFHNVINGGKHADNGIDIQEFMITPVAKNSFRDGFEKIVNTYHALKAVIEEAGFETGLGDEGGFAPNLNSSEEALKMLRKAIIKAGYKPRKDIAIAFDAAASSFYNTEDGKYHFEGHIWNGEEMLQYYDKLLKEFPEIISCEDPFDENDWENFEKFTAKFGSTHQVVADDNVCTNPKLVRKAIKDKLCNSILIKLNQIGTITETLETIRLARKNNMTTMVSHRSGETGDTFIADFTVATNAGQLKSGAPARSERVEKYNRLLEIENQIGVENERLNHFPNNVDFD.

(2R)-2-phosphoglycerate is bound at residue Q162. E204 serves as the catalytic Proton donor. Residues D241, E285, and D312 each contribute to the Mg(2+) site. Positions 337, 366, 367, and 388 each coordinate (2R)-2-phosphoglycerate. Catalysis depends on K337, which acts as the Proton acceptor.

The protein belongs to the enolase family. Mg(2+) is required as a cofactor.

The protein resides in the cytoplasm. It localises to the secreted. It is found in the cell surface. The catalysed reaction is (2R)-2-phosphoglycerate = phosphoenolpyruvate + H2O. It functions in the pathway carbohydrate degradation; glycolysis; pyruvate from D-glyceraldehyde 3-phosphate: step 4/5. Functionally, catalyzes the reversible conversion of 2-phosphoglycerate (2-PG) into phosphoenolpyruvate (PEP). It is essential for the degradation of carbohydrates via glycolysis. The protein is Enolase 2 of Lactobacillus johnsonii (strain CNCM I-12250 / La1 / NCC 533).